Reading from the N-terminus, the 420-residue chain is Histidine--tRNA ligase (420 aa).

This sequence belongs to the class-II aminoacyl-tRNA synthetase family. As to quaternary structure, homodimer.

It localises to the cytoplasm. The enzyme catalyses tRNA(His) + L-histidine + ATP = L-histidyl-tRNA(His) + AMP + diphosphate + H(+). This is Histidine--tRNA ligase from Ureaplasma parvum serovar 3 (strain ATCC 27815 / 27 / NCTC 11736).